Reading from the N-terminus, the 1141-residue chain is Myosin-binding protein C, slow-type (1141 aa).

The segment covering 1 to 10 (MPEPTKKEEN) has biased composition (basic and acidic residues). Positions 1 to 51 (MPEPTKKEENEVPAPAPPPEEPSKEKEAGTTPAKDWTLVETPPGEEQAKQN) are disordered. Ig-like C2-type domains are found at residues 72–144 (GEDI…RCEV), 251–340 (SAAF…VREP), 341–431 (PIMV…VDLK), 432–520 (PLKI…HVID), and 522–619 (PKII…VVDF). Thr406 is modified (phosphothreonine). Ser611 carries the post-translational modification Phosphoserine. Fibronectin type-III domains are found at residues 622-721 (PPVA…TSPP) and 722-833 (TLLT…VKEI). The residue at position 798 (Thr798) is a Phosphothreonine. Residue Tyr823 is modified to Phosphotyrosine. In terms of domain architecture, Ig-like C2-type 6 spans 837–931 (PKIRIPRHLK…ASIDIQIIDR (95 aa)). The region spanning 934-1029 (PPQIVKIEDV…TKESAVIARD (96 aa)) is the Fibronectin type-III 3 domain. An Ig-like C2-type 7 domain is found at 1047-1141 (PMFTQPLVNT…CKLEVKVIAQ (95 aa)).

This sequence belongs to the immunoglobulin superfamily. MyBP family. Interacts with USP25 (isoform USP25m only); the interaction prevents proteasomal degradation of MYBPC1.

Its function is as follows. Thick filament-associated protein located in the crossbridge region of vertebrate striated muscle a bands. Slow skeletal protein that binds to both myosin and actin. In vitro, binds to native thin filaments and modifies the activity of actin-activated myosin ATPase. May modulate muscle contraction or may play a more structural role. The protein is Myosin-binding protein C, slow-type (MYBPC1) of Homo sapiens (Human).